Consider the following 1029-residue polypeptide: Collagen, type I, alpha 1b (1029 aa).

Residues 1 to 990 (QMSYVDHSKS…KAPDPFRGGH (990 aa)) form a disordered region. A compositionally biased stretch (pro residues) spans 13-33 (PPQPGPMGPMGPRGPPGPPGS). The span at 34–57 (SGPQGFTGPPGEPGEPGASGAMGS) shows a compositional bias: low complexity. A compositionally biased stretch (basic and acidic residues) spans 67 to 81 (NGDDGEPGKPGRPGE). Low complexity-rich tracts occupy residues 82-91 (RGAAGPQGAR), 120-129 (VPGVMGARGR), and 136-147 (SGARGNDGNTGP). The segment covering 163–182 (PGGAGAKGETGPAGGRGNEG) has biased composition (gly residues). Composition is skewed to low complexity over residues 199-223 (AGPAGSPGTDGAPGAKGSPGAAGLA), 233-267 (AQGAVGAPGPKGNNGDPGASGPKGEPGAKGEPGPA), and 299-309 (ERGAPGARGFP). The segment covering 310–322 (GADGGAGGKGAPG) has biased composition (gly residues). Composition is skewed to low complexity over residues 323–351 (ERGAPGALGAQGATGESGSPGAPGAPGSK) and 429–465 (VGAPGPSGVAGPAGEKGEQGPAGPPGFQGLPGPQGAT). Over residues 466-477 (GETGKGLGGPTG) the composition is skewed to gly residues. Over residues 478–497 (PRGAPGPAGNDGAKGEPGAA) the composition is skewed to low complexity. 2 stretches are compositionally biased toward gly residues: residues 498-507 (GAPGGLGAPG) and 531-540 (GGKGGDGAPG). 2 stretches are compositionally biased toward low complexity: residues 571 to 580 (VAGPTGPRGA) and 593 to 620 (AGFAGPPGADGQPGAKGETGDSGPKGDA). Gly residues-rich tracts occupy residues 621–630 (GAPGPGGPVG) and 645–654 (GARGGAGPPG). 5 stretches are compositionally biased toward low complexity: residues 655–665 (ATGFPGPAGRV), 694–722 (ETGAAGRPGEAGAAGAPGPSGEKGSPGXD), 731–743 (PQGLAGQRGLPGQ), 830–839 (APGAVGPSGK), and 855–869 (SGPAGVRGPAGPAGA). Residues 870-884 (KGDRGEAGEAGDRGG) show a composition bias toward basic and acidic residues. Residues 906–934 (PAGASGPAGPRGPAGSNGAPGKDGMNGLP) are compositionally biased toward low complexity. The span at 952–967 (AGPPGPPGPAGPPGPP) shows a compositional bias: pro residues. Positions 999–1029 (TQKLPLLDLAPMDVGAPDQEFGVEVGPVCFL) constitute a Fibrillar collagen NC1 domain.

Belongs to the fibrillar collagen family.

The protein resides in the secreted. It is found in the extracellular space. Its subcellular location is the extracellular matrix. This Epinephelus aeneus (White grouper) protein is Collagen, type I, alpha 1b.